Consider the following 279-residue polypeptide: Large ribosomal subunit protein uL2 (279 aa).

Disordered stretches follow at residues 29–59 and 224–279; these read PEKSLLRPLHKTGGRNNSGKITTRHKGGGHK and VAMN…KNKR. The span at 50–59 shows a compositional bias: basic residues; it reads TTRHKGGGHK. The span at 253-268 shows a compositional bias: basic and acidic residues; sequence PEGRTRRPNKESDKLI. Residues 269–279 show a composition bias toward basic residues; sequence VRRRRTGKNKR.

The protein belongs to the universal ribosomal protein uL2 family. Part of the 50S ribosomal subunit. Forms a bridge to the 30S subunit in the 70S ribosome.

Its function is as follows. One of the primary rRNA binding proteins. Required for association of the 30S and 50S subunits to form the 70S ribosome, for tRNA binding and peptide bond formation. It has been suggested to have peptidyltransferase activity; this is somewhat controversial. Makes several contacts with the 16S rRNA in the 70S ribosome. This Paenarthrobacter aurescens (strain TC1) protein is Large ribosomal subunit protein uL2.